Here is a 343-residue protein sequence, read N- to C-terminus: Phosphate acyltransferase (343 aa).

It belongs to the PlsX family. In terms of assembly, homodimer. Probably interacts with PlsY.

It localises to the cytoplasm. The enzyme catalyses a fatty acyl-[ACP] + phosphate = an acyl phosphate + holo-[ACP]. It participates in lipid metabolism; phospholipid metabolism. Functionally, catalyzes the reversible formation of acyl-phosphate (acyl-PO(4)) from acyl-[acyl-carrier-protein] (acyl-ACP). This enzyme utilizes acyl-ACP as fatty acyl donor, but not acyl-CoA. The chain is Phosphate acyltransferase from Limosilactobacillus reuteri (strain DSM 20016) (Lactobacillus reuteri).